Here is a 36-residue protein sequence, read N- to C-terminus: Kappa-isophellitoxin-Tst1a (36 aa).

The 35-residue stretch at 2–36 folds into the ShKT domain; that stretch reads CENNFSDRECERRKKDCDSSMKFRELSCPKTCGTC. Intrachain disulfides connect Cys-2-Cys-36, Cys-11-Cys-29, and Cys-18-Cys-33.

This sequence belongs to the sea anemone type 1 potassium channel toxin family. Type 1a subfamily. Predominantly expressed in mesenterial filaments (at protein level), a morphological structure that has a functional role in prey killing and digestion. Also expressed in club-tips, tentacles, actinopharynx, body column, mesenterial filaments and pedal disk.

It is found in the secreted. The protein localises to the nematocyst. Probable toxin with unknown function. Does not inhibit all channels tested. Is not cytotoxic on macrophage. The chain is Kappa-isophellitoxin-Tst1a from Telmatactis stephensoni (Sea anemone).